A 200-amino-acid chain; its full sequence is Nucleoplasmin (200 aa).

The residue at position 2 (Ala-2) is an N-acetylalanine. The residue at position 3 (Ser-3) is a Phosphoserine. The residue at position 4 (Thr-4) is a Phosphothreonine. A Phosphoserine modification is found at Ser-6. Thr-8 carries the post-translational modification Phosphothreonine. Positions 35 to 39 (EDDEE) are acidic tract A1. A compositionally biased stretch (acidic residues) spans 123 to 148 (DYSWAEEEDEGEAEGEEEEEEEEDQE). The disordered stretch occupies residues 123–200 (DYSWAEEEDE…GRGRKPAAKK (78 aa)). The interval 128–148 (EEEDEGEAEGEEEEEEEEDQE) is acidic tract A2. Ser-149 carries the phosphoserine modification. A compositionally biased stretch (basic residues) spans 153 to 170 (AVKRPAATKKAGQAKKKK). The short motif at 155-170 (KRPAATKKAGQAKKKK) is the Bipartite nuclear localization signal element. The tract at residues 174–176 (EDE) is acidic tract A3. Phosphoserine is present on residues Ser-177, Ser-178, and Ser-182. A compositionally biased stretch (basic residues) spans 185–200 (KKGKGAGRGRKPAAKK). Arg-192 bears the Omega-N-methylarginine; by PRMT5; alternate mark. At Arg-192 the chain carries Symmetric dimethylarginine; by PRMT5; alternate.

This sequence belongs to the nucleoplasmin family. Homopentamer, when bound to H2A-H2B dimers only. Homodecamer of two stacked pentamers, when bound to H2A-H2B dimers and H3-H4 tetramers simultaneously. Interacts with the heterotetramer formed by wdr77 and prmt5. Post-translationally, activated by phosphorylation of multiple serine/threonine residues, along both core and tail domains. The level of phosphorylation gradually increases during egg maturation, reaching an average of 7-10 phosphates per monomer, so that at the time of fertilization the activity of the protein is maximum. Methylated by prmt5, yielding both monomethylated and symmetrically dimethylated Arg-192.

The protein resides in the nucleus. In terms of biological role, acts as a chaperone for histones, such as histone H2A-H2B, and thus regulates the assembly of nucleosome cores. Involved in chromatin remodeling, especially during fertilization and early embryonic development. May be involved in sperm chromatin decondensation during fertilization. This chain is Nucleoplasmin, found in Xenopus laevis (African clawed frog).